The primary structure comprises 492 residues: Probable Xaa-Pro aminopeptidase AO090005001240 (492 aa).

Positions 272, 283, 420, and 459 each coordinate Mn(2+).

The protein belongs to the peptidase M24B family. The cofactor is Mn(2+).

The catalysed reaction is Release of any N-terminal amino acid, including proline, that is linked to proline, even from a dipeptide or tripeptide.. Its function is as follows. Catalyzes the removal of a penultimate prolyl residue from the N-termini of peptides. In Aspergillus oryzae (strain ATCC 42149 / RIB 40) (Yellow koji mold), this protein is Probable Xaa-Pro aminopeptidase AO090005001240.